The sequence spans 159 residues: Ribosome maturation factor RimP (159 aa).

It belongs to the RimP family.

The protein localises to the cytoplasm. Required for maturation of 30S ribosomal subunits. The sequence is that of Ribosome maturation factor RimP from Streptococcus agalactiae serotype III (strain NEM316).